Here is an 89-residue protein sequence, read N- to C-terminus: MALTQERKREIIEQFKVHENDTGSPEVQIAILTEQINNLNEHLRVHKKDHHSRRGLLKMVGKRRNLLAYLRNKDVARYRELIEKLGLRR.

Belongs to the universal ribosomal protein uS15 family. As to quaternary structure, part of the 30S ribosomal subunit. Forms a bridge to the 50S subunit in the 70S ribosome, contacting the 23S rRNA.

In terms of biological role, one of the primary rRNA binding proteins, it binds directly to 16S rRNA where it helps nucleate assembly of the platform of the 30S subunit by binding and bridging several RNA helices of the 16S rRNA. Functionally, forms an intersubunit bridge (bridge B4) with the 23S rRNA of the 50S subunit in the ribosome. The protein is Small ribosomal subunit protein uS15 of Geobacillus thermodenitrificans (strain NG80-2).